The chain runs to 1094 residues: Probable serine/threonine-protein kinase kinX (1094 aa).

Residues 22–281 (LDFISEIGSG…QTLKQIKTTL (260 aa)) form the Protein kinase domain. Residues 28-36 (IGSGGFGKV) and Lys-49 contribute to the ATP site. Asp-146 serves as the catalytic Proton acceptor. 2 disordered regions span residues 301 to 884 (TTNG…SVED) and 946 to 1083 (IKVE…PNNK). The segment covering 330-344 (YDDDDDDDDDDDDND) has biased composition (acidic residues). A compositionally biased stretch (polar residues) spans 351 to 373 (SDNSNSNVTLESNSNYNSSTING). Residues 374-387 (QEQQEQQEQQQQQQ) are compositionally biased toward low complexity. Residues 393 to 408 (DEGEIEQDDDNIEVYD) show a composition bias toward acidic residues. Residues 410–424 (DYQKKLEEHQKELLE) are compositionally biased toward basic and acidic residues. Acidic residues-rich tracts occupy residues 433-454 (STDENEVYEQEEEEEEEDEEEQ), 480-496 (DDEDDDDDEEDEEEGDE), and 503-523 (DFDEDDEDDEEYDEDEDDEDE). Composition is skewed to low complexity over residues 526–542 (IQYYQQQLQYQQQLQKQ) and 564–585 (RQLQQQQQQQQQQQQQQQQHQQ). Residues 587 to 602 (YDDDDDDDDEEEEEYD) show a composition bias toward acidic residues. Basic and acidic residues predominate over residues 603 to 639 (DVIRHDTDSEEESKDKTPLPWDQHFEKQKESENKVEQ). Residues 650–661 (QETEQQQQQQQQ) are compositionally biased toward low complexity. Basic and acidic residues predominate over residues 670 to 801 (PTKVEDVKVE…EPVEEVKVEE (132 aa)). The segment at 676-978 (VKVETEEQTK…PVKVEVASPV (303 aa)) is 40 X 9 AA approximate repeats of V-K-V-E-E-P-V-E-E. Over residues 802–816 (PVEEVEAEESVQEPV) the composition is skewed to acidic residues. Basic and acidic residues-rich tracts occupy residues 817–884 (EEVK…SVED) and 946–971 (IKVEEPIKVEEPIKVEEPIKVEEPVK). Low complexity-rich tracts occupy residues 972 to 985 (VEVASPVVQEQPPQ) and 992 to 1011 (VVSTSTITIASSPQQSSNSP). Positions 1016-1031 (VKQPQQQEIEVNSTPI) are enriched in polar residues. Over residues 1032–1050 (KQQQQQQQTPTQQTQTPTK) the composition is skewed to low complexity.

Belongs to the protein kinase superfamily. TKL Ser/Thr protein kinase family.

It catalyses the reaction L-seryl-[protein] + ATP = O-phospho-L-seryl-[protein] + ADP + H(+). It carries out the reaction L-threonyl-[protein] + ATP = O-phospho-L-threonyl-[protein] + ADP + H(+). This is Probable serine/threonine-protein kinase kinX (kinX) from Dictyostelium discoideum (Social amoeba).